Consider the following 173-residue polypeptide: Alpha-crystallin A chain (173 aa).

Met-1 carries the post-translational modification N-acetylmethionine. Residues 1–63 (MDVTIQHPWF…RTVLDSGISE (63 aa)) are required for complex formation with BFSP1 and BFSP2. At Gln-6 the chain carries Deamidated glutamine; partial. At Ser-45 the chain carries Phosphoserine. Gln-50 and Gln-90 each carry deamidated glutamine; partial. Residues 52-162 (LFRTVLDSGI…SHSERAIPVS (111 aa)) form the sHSP domain. At Lys-99 the chain carries N6-acetyllysine. His-100 contributes to the Zn(2+) binding site. The residue at position 101 (Asn-101) is a Deamidated asparagine; partial. Residues Glu-102 and His-107 each contribute to the Zn(2+) site. Ser-122 is modified (phosphoserine). Deamidated asparagine; partial is present on Asn-123. Cys-131 and Cys-142 are disulfide-bonded. A Deamidated glutamine; partial modification is found at Gln-147. Residues 149–173 (GMDASHSERAIPVSREEKPSSAPSS) are disordered. A compositionally biased stretch (basic and acidic residues) spans 153–167 (SHSERAIPVSREEKP). His-154 contacts Zn(2+). O-linked (GlcNAc) serine glycosylation is present at Ser-162.

The protein belongs to the small heat shock protein (HSP20) family. As to quaternary structure, heteromer composed of three CRYAA and one CRYAB subunits. Inter-subunit bridging via zinc ions enhances stability, which is crucial as there is no protein turn over in the lens. Can also form homodimers and homotetramers (dimers of dimers) which serve as the building blocks of homooligomers. Within homooligomers, the zinc-binding motif is created from residues of 3 different molecules. His-100 and Glu-102 from one molecule are ligands of the zinc ion, and His-107 and His-154 residues from additional molecules complete the site with tetrahedral coordination geometry. Part of a complex required for lens intermediate filament formation composed of BFSP1, BFSP2 and CRYAA. In terms of processing, undergoes age-dependent proteolytical cleavage at the C-terminus.

It is found in the cytoplasm. It localises to the nucleus. In terms of biological role, contributes to the transparency and refractive index of the lens. In its oxidized form (absence of intramolecular disulfide bond), acts as a chaperone, preventing aggregation of various proteins under a wide range of stress conditions. Required for the correct formation of lens intermediate filaments as part of a complex composed of BFSP1, BFSP2 and CRYAA. The chain is Alpha-crystallin A chain (CRYAA) from Loxodonta africana (African elephant).